We begin with the raw amino-acid sequence, 38 residues long: Augerpeptide hhe53 (38 aa).

In terms of processing, contains 2 disulfide bonds. Expressed by the venom duct.

The protein resides in the secreted. The chain is Augerpeptide hhe53 from Hastula hectica (Sea snail).